Reading from the N-terminus, the 495-residue chain is MRNLAVFGTASDVGKSVVATALCRIFSNAGLDVAPFKAQNMSNNSGVTPDGLEMGRAQIVQAEAARVVPTADMNPVLLKPNTDTGAQVVLQGKAVANRSARDYFGNTEVWAEAAFESLERLTGRHDLVVIEGAGSCAEMNLYDRDFVNFRTAKEADAPVILVADIDRGGVFAQVAGTLSVIPPEDRARVKGVIINRFRGDSVLFDDGIRILEELSGVPVLGVIPYFRGIHIEAEDAVPLQAVVDPAASPDPGKISIAIVYFPHISNFTDFAVFDLLDDAEVHYLHHPKDLADYDAVILPGSKNVRGDLDWMIFMGWKERLAEYRKRGGIIAGICGGYQMLGISVADPHGLEGEPGETSGLGLLPVHTLLKKEKQLFNAKGCLFDDTIPVEGYEIHMGETRLTGKASPLLQLTARNNRHSSDTDGVISHDEKVFGTYFHGIFDGSAFRGWFLGKLRPDSAVNDTITEKDTEYNRLAEHFLSHLNMGKVYEIIGRGK.

In terms of domain architecture, GATase cobBQ-type spans Lys-253–Phe-446. Cys-334 serves as the catalytic Nucleophile. The active site involves His-438.

The protein belongs to the CobB/CobQ family. CobQ subfamily.

Its pathway is cofactor biosynthesis; adenosylcobalamin biosynthesis. Its function is as follows. Catalyzes amidations at positions B, D, E, and G on adenosylcobyrinic A,C-diamide. NH(2) groups are provided by glutamine, and one molecule of ATP is hydrogenolyzed for each amidation. This chain is Cobyric acid synthase, found in Chlorobium phaeobacteroides (strain BS1).